A 465-amino-acid polypeptide reads, in one-letter code: E3 ubiquitin-protein ligase parkin (465 aa).

The Ubiquitin-like domain maps to 1–76 (MIVFVRFNSS…VHIVQRPWRK (76 aa)). Serine 65 is subject to Phosphoserine; by PINK1. The segment at 77–99 (GQEMNATGGDDPRNAAGGCEREP) is disordered. The interval 77 to 237 (GQEMNATGGD…LIATNSRNIT (161 aa)) is necessary for PINK1-dependent localization to mitochondria. An RING-type 0; atypical zinc finger spans residues 141-225 (SIYNSFYVYC…PTSDKETSVA (85 aa)). At threonine 175 the chain carries Phosphothreonine; by PINK1. Residues 204–238 (TSAEFFFKCGAHPTSDKETSVALHLIATNSRNITC) are SYT11 binding 1. Threonine 217 is subject to Phosphothreonine. Positions 234–465 (RNITCITCTD…VCMGDHWFDV (232 aa)) are TRIAD supradomain. Positions 238, 241, 253, 257, 260, 263, 289, 293, 332, and 337 each coordinate Zn(2+). The RING-type 1 zinc finger occupies 238-293 (CITCTDVRSPVLVFQCNSRHVICLDCFHLYCVTRLNDRQFVHDPQLGYSLPCVAGC). The segment at 257 to 293 (HVICLDCFHLYCVTRLNDRQFVHDPQLGYSLPCVAGC) is SYT11 binding 2. An IBR-type zinc finger spans residues 313–377 (NRYQQYGAEE…CKEAYHEGEC (65 aa)). Residue lysine 349 forms a Glycyl lysine isopeptide (Lys-Gly) (interchain with G-Cter in ISG15) linkage. Zn(2+) is bound by residues cysteine 352, cysteine 360, cysteine 365, and cysteine 368. Lysine 369 is covalently cross-linked (Glycyl lysine isopeptide (Lys-Gly) (interchain with G-Cter in ISG15)). Zn(2+)-binding residues include histidine 373 and cysteine 377. An REP region spans residues 378-410 (SAVFEASGTTTQAYRVDERAAEQARWEAASKET). Zn(2+) contacts are provided by cysteine 418 and cysteine 421. The RING-type 2; atypical zinc-finger motif lies at 418–449 (CPRCHVPVEKNGGCMHMKCPQPQCRLEWCWNC). Residue cysteine 431 is part of the active site. Cysteine 436, cysteine 441, cysteine 446, cysteine 449, cysteine 457, and histidine 461 together coordinate Zn(2+).

The protein belongs to the RBR family. Parkin subfamily. In terms of assembly, forms an E3 ubiquitin ligase complex with UBE2L3 or UBE2L6. Mediates 'Lys-63'-linked polyubiquitination by associating with UBE2V1. Part of a SCF-like complex, consisting of PRKN, CUL1 and FBXW7. Interacts with SNCAIP. Binds to the C2A and C2B domains of SYT11. Interacts and regulates the turnover of SEPTIN5. Part of a complex, including STUB1, HSP70 and GPR37. The amount of STUB1 in the complex increases during ER stress. STUB1 promotes the dissociation of HSP70 from PRKN and GPR37, thus facilitating PRKN-mediated GPR37 ubiquitination. HSP70 transiently associates with unfolded GPR37 and inhibits the E3 activity of PRKN, whereas, STUB1 enhances the E3 activity of PRKN through promotion of dissociation of HSP70 from PRKN-GPR37 complexes. Interacts with PSMD4 and PACRG. Interacts with LRRK2. Interacts with RANBP2. Interacts with SUMO1 but not SUMO2, which promotes nuclear localization and autoubiquitination. Interacts (via first RING-type domain) with AIMP2 (via N-terminus). Interacts with PSMA7 and RNF41. Interacts with PINK1. Forms a complex with PINK1 and PARK7. Interacts with CHPF, the interaction with isoform 2 may facilitate PRKN transport into the mitochondria. Interacts with MFN2 (phosphorylated), promotes PRKN localization in dysfunctional depolarized mitochondria. Interacts with FBXO7; this promotes translocation to dysfunctional depolarized mitochondria. Interacts with ZNF746. Interacts with heat shock protein 70 family members, including HSPA1L, HSPA1A and HSPA8; interaction HSPA1L promotes translocation to damaged mitochondria. Interacts with BAG4 and, to a lesser extent, BAG5; interaction with BAG4 inhibits translocation to damaged mitochondria. Forms a complex with PRKN and PARK7. Interacts with AMBRA1. Post-translationally, ISGylated. Conjugated to ubiquitin-like protein ISG15 upon IFN-beta stimulation. ISGylation positively regulates its E3 ligase activity. In terms of processing, auto-ubiquitinates in an E2-dependent manner leading to its own degradation. Also polyubiquitinated by RNF41 for proteasomal degradation. S-nitrosylated. The inhibition of PRKN ubiquitin E3 ligase activity by S-nitrosylation could contribute to the degenerative process in PD by impairing the ubiquitination of PRKN substrates. Post-translationally, phosphorylated. Activation requires phosphorylation at Ser-65 by PINK1 and binding to PINK1 phosphorylated ubiquitin. Phosphorylation at Thr-175 by PINK1 and at Thr-217 is important for mitochondrial localization. Highly expressed in the brain including the substantia nigra. Expressed in heart, testis and skeletal muscle. Expression is down-regulated or absent in tumor biopsies, and absent in the brain of PARK2 patients. Overexpression protects dopamine neurons from kainate-mediated apoptosis. Found in serum (at protein level).

The protein localises to the cytoplasm. It is found in the cytosol. It localises to the nucleus. Its subcellular location is the endoplasmic reticulum. The protein resides in the mitochondrion. The protein localises to the mitochondrion outer membrane. It is found in the cell projection. It localises to the neuron projection. Its subcellular location is the postsynaptic density. The protein resides in the presynapse. The catalysed reaction is [E2 ubiquitin-conjugating enzyme]-S-ubiquitinyl-L-cysteine + [acceptor protein]-L-lysine = [E2 ubiquitin-conjugating enzyme]-L-cysteine + [acceptor protein]-N(6)-ubiquitinyl-L-lysine.. It functions in the pathway protein modification; protein ubiquitination. Its activity is regulated as follows. In the autoinhibited state the side chain of Phe-463 inserts into a hydrophobic groove in RING-0, occluding the ubiquitin acceptor site Cys-431, whereas the REP repressor element binds RING-1 and blocks its E2-binding site. Activation of PRKN requires 2 steps: (1) phosphorylation at Ser-65 by PINK1 and (2) binding to phosphorylated ubiquitin, leading to unlock repression of the catalytic Cys-431 by the RING-0 region via an allosteric mechanism and converting PRKN to its fully-active form. According to another report, phosphorylation at Ser-65 by PINK1 is not essential for activation and only binding to phosphorylated ubiquitin is essential to unlock repression. In addition, ISG15 conjugation positively regulates its ubiquitin E3 ligase activity by suppressing the intramolecular interaction that maintains its autoinhibited conformation. Its function is as follows. Functions within a multiprotein E3 ubiquitin ligase complex, catalyzing the covalent attachment of ubiquitin moieties onto substrate proteins. Substrates include SYT11 and VDAC1. Other substrates are BCL2, CCNE1, GPR37, RHOT1/MIRO1, MFN1, MFN2, STUB1, SNCAIP, SEPTIN5, TOMM20, USP30, ZNF746, MIRO1 and AIMP2. Mediates monoubiquitination as well as 'Lys-6', 'Lys-11', 'Lys-48'-linked and 'Lys-63'-linked polyubiquitination of substrates depending on the context. Participates in the removal and/or detoxification of abnormally folded or damaged protein by mediating 'Lys-63'-linked polyubiquitination of misfolded proteins such as PARK7: 'Lys-63'-linked polyubiquitinated misfolded proteins are then recognized by HDAC6, leading to their recruitment to aggresomes, followed by degradation. Mediates 'Lys-63'-linked polyubiquitination of a 22 kDa O-linked glycosylated isoform of SNCAIP, possibly playing a role in Lewy-body formation. Mediates monoubiquitination of BCL2, thereby acting as a positive regulator of autophagy. Protects against mitochondrial dysfunction during cellular stress, by acting downstream of PINK1 to coordinate mitochondrial quality control mechanisms that remove and replace dysfunctional mitochondrial components. Depending on the severity of mitochondrial damage and/or dysfunction, activity ranges from preventing apoptosis and stimulating mitochondrial biogenesis to regulating mitochondrial dynamics and eliminating severely damaged mitochondria via mitophagy. Activation and recruitment onto the outer membrane of damaged/dysfunctional mitochondria (OMM) requires PINK1-mediated phosphorylation of both PRKN and ubiquitin. After mitochondrial damage, functions with PINK1 to mediate the decision between mitophagy or preventing apoptosis by inducing either the poly- or monoubiquitination of VDAC1, respectively; polyubiquitination of VDAC1 promotes mitophagy, while monoubiquitination of VDAC1 decreases mitochondrial calcium influx which ultimately inhibits apoptosis. When cellular stress results in irreversible mitochondrial damage, promotes the autophagic degradation of dysfunctional depolarized mitochondria (mitophagy) by promoting the ubiquitination of mitochondrial proteins such as TOMM20, RHOT1/MIRO1, MFN1 and USP30. Preferentially assembles 'Lys-6'-, 'Lys-11'- and 'Lys-63'-linked polyubiquitin chains, leading to mitophagy. The PINK1-PRKN pathway also promotes fission of damaged mitochondria by PINK1-mediated phosphorylation which promotes the PRKN-dependent degradation of mitochondrial proteins involved in fission such as MFN2. This prevents the refusion of unhealthy mitochondria with the mitochondrial network or initiates mitochondrial fragmentation facilitating their later engulfment by autophagosomes. Regulates motility of damaged mitochondria via the ubiquitination and subsequent degradation of MIRO1 and MIRO2; in motor neurons, this likely inhibits mitochondrial intracellular anterograde transport along the axons which probably increases the chance of the mitochondria undergoing mitophagy in the soma. Involved in mitochondrial biogenesis via the 'Lys-48'-linked polyubiquitination of transcriptional repressor ZNF746/PARIS which leads to its subsequent proteasomal degradation and allows activation of the transcription factor PPARGC1A. Limits the production of reactive oxygen species (ROS). Regulates cyclin-E during neuronal apoptosis. In collaboration with CHPF isoform 2, may enhance cell viability and protect cells from oxidative stress. Independently of its ubiquitin ligase activity, protects from apoptosis by the transcriptional repression of p53/TP53. May protect neurons against alpha synuclein toxicity, proteasomal dysfunction, GPR37 accumulation, and kainate-induced excitotoxicity. May play a role in controlling neurotransmitter trafficking at the presynaptic terminal and in calcium-dependent exocytosis. May represent a tumor suppressor gene. In Homo sapiens (Human), this protein is E3 ubiquitin-protein ligase parkin.